Consider the following 425-residue polypeptide: Serine--tRNA ligase (425 aa).

Threonine 231 to glutamate 233 provides a ligand contact to L-serine. Arginine 262–glutamate 264 serves as a coordination point for ATP. Glutamate 285 lines the L-serine pocket. An ATP-binding site is contributed by glutamate 349 to serine 352. Serine 385 contacts L-serine.

Belongs to the class-II aminoacyl-tRNA synthetase family. Type-1 seryl-tRNA synthetase subfamily. Homodimer. The tRNA molecule binds across the dimer.

It is found in the cytoplasm. The enzyme catalyses tRNA(Ser) + L-serine + ATP = L-seryl-tRNA(Ser) + AMP + diphosphate + H(+). The catalysed reaction is tRNA(Sec) + L-serine + ATP = L-seryl-tRNA(Sec) + AMP + diphosphate + H(+). The protein operates within aminoacyl-tRNA biosynthesis; selenocysteinyl-tRNA(Sec) biosynthesis; L-seryl-tRNA(Sec) from L-serine and tRNA(Sec): step 1/1. Functionally, catalyzes the attachment of serine to tRNA(Ser). Is also able to aminoacylate tRNA(Sec) with serine, to form the misacylated tRNA L-seryl-tRNA(Sec), which will be further converted into selenocysteinyl-tRNA(Sec). The protein is Serine--tRNA ligase of Bacillus licheniformis (strain ATCC 14580 / DSM 13 / JCM 2505 / CCUG 7422 / NBRC 12200 / NCIMB 9375 / NCTC 10341 / NRRL NRS-1264 / Gibson 46).